Here is a 104-residue protein sequence, read N- to C-terminus: Small ribosomal subunit protein uS10 (104 aa).

The protein belongs to the universal ribosomal protein uS10 family. In terms of assembly, part of the 30S ribosomal subunit.

Functionally, involved in the binding of tRNA to the ribosomes. This Albidiferax ferrireducens (strain ATCC BAA-621 / DSM 15236 / T118) (Rhodoferax ferrireducens) protein is Small ribosomal subunit protein uS10.